A 310-amino-acid polypeptide reads, in one-letter code: Hydroxyacylglutathione hydrolase, mitochondrial (310 aa).

Zn(2+) is bound by residues histidine 104, histidine 106, aspartate 108, histidine 109, histidine 160, and aspartate 184. Substrate is bound by residues 193–195 (KFF), 223–225 (HEY), and 299–302 (RKEK). Position 223 (histidine 223) interacts with Zn(2+).

It belongs to the metallo-beta-lactamase superfamily. Glyoxalase II family. Monomer. The cofactor is Zn(2+).

It localises to the mitochondrion matrix. The protein resides in the cytoplasm. It catalyses the reaction an S-(2-hydroxyacyl)glutathione + H2O = a 2-hydroxy carboxylate + glutathione + H(+). It carries out the reaction (R)-S-lactoylglutathione + H2O = (R)-lactate + glutathione + H(+). Thiolesterase that catalyzes the hydrolysis of S-D-lactoyl-glutathione to form glutathione and D-lactic acid. The polypeptide is Hydroxyacylglutathione hydrolase, mitochondrial (HAGH) (Gallus gallus (Chicken)).